The following is a 369-amino-acid chain: MSIDFQQLPHAGIRSLIPYVPGKSIEELAKEKGITDIIKLASNENPLGCSPLALSVIQTMSSHYIATYPSPWNHPLMSKLASYLKVKPEQLFLSNGSDYLFNILLNCFALHTDRHILTHDYAFSTYAIQANSLQIPINSVPIGHNWEVNITDIVNACNQQTGIIFIANPNNPTGVLIQQEEIKYLLEQIPKSTLLVLDEAYYEFAASQLTVNSLDWLEEHPNLVVTRTFSKIYGMAGLRLGYAIANPSIINILKRVQLPFIVNQVALAAAYAAIDDDDFIQSSLKMNNEGMLQLQAGFNELNIKYLPSSCNFLTFDCEEDSMALYNYLLDNGIIVRPLHAYKMNNFIRVTIGTKEQNSRFLTALKNFYL.

Lys-231 carries the N6-(pyridoxal phosphate)lysine modification.

It belongs to the class-II pyridoxal-phosphate-dependent aminotransferase family. Histidinol-phosphate aminotransferase subfamily. As to quaternary structure, homodimer. Requires pyridoxal 5'-phosphate as cofactor.

The catalysed reaction is L-histidinol phosphate + 2-oxoglutarate = 3-(imidazol-4-yl)-2-oxopropyl phosphate + L-glutamate. Its pathway is amino-acid biosynthesis; L-histidine biosynthesis; L-histidine from 5-phospho-alpha-D-ribose 1-diphosphate: step 7/9. This chain is Histidinol-phosphate aminotransferase 2, found in Legionella pneumophila subsp. pneumophila (strain Philadelphia 1 / ATCC 33152 / DSM 7513).